The following is a 73-amino-acid chain: Translation initiation factor IF-1 (73 aa).

The region spanning 1–73 (MAKKEDTIVL…TKARVVYRHR (73 aa)) is the S1-like domain.

The protein belongs to the IF-1 family. In terms of assembly, component of the 30S ribosomal translation pre-initiation complex which assembles on the 30S ribosome in the order IF-2 and IF-3, IF-1 and N-formylmethionyl-tRNA(fMet); mRNA recruitment can occur at any time during PIC assembly.

The protein resides in the cytoplasm. In terms of biological role, one of the essential components for the initiation of protein synthesis. Stabilizes the binding of IF-2 and IF-3 on the 30S subunit to which N-formylmethionyl-tRNA(fMet) subsequently binds. Helps modulate mRNA selection, yielding the 30S pre-initiation complex (PIC). Upon addition of the 50S ribosomal subunit IF-1, IF-2 and IF-3 are released leaving the mature 70S translation initiation complex. The polypeptide is Translation initiation factor IF-1 (Chlamydia caviae (strain ATCC VR-813 / DSM 19441 / 03DC25 / GPIC) (Chlamydophila caviae)).